The following is a 488-amino-acid chain: Glutamate--tRNA ligase (488 aa).

Residues 12–22 (PSPTGYMHVGN) carry the 'HIGH' region motif. C109, C111, C136, and H138 together coordinate Zn(2+). Positions 253-257 (KLSKR) match the 'KMSKS' region motif. ATP is bound at residue K256.

Belongs to the class-I aminoacyl-tRNA synthetase family. Glutamate--tRNA ligase type 1 subfamily. In terms of assembly, monomer. Zn(2+) is required as a cofactor.

Its subcellular location is the cytoplasm. It catalyses the reaction tRNA(Glu) + L-glutamate + ATP = L-glutamyl-tRNA(Glu) + AMP + diphosphate. Its function is as follows. Catalyzes the attachment of glutamate to tRNA(Glu) in a two-step reaction: glutamate is first activated by ATP to form Glu-AMP and then transferred to the acceptor end of tRNA(Glu). The polypeptide is Glutamate--tRNA ligase (Clostridium tetani (strain Massachusetts / E88)).